We begin with the raw amino-acid sequence, 322 residues long: Putative T-box protein 11 (322 aa).

The segment at residues 16 to 185 is a DNA-binding region (T-box); the sequence is LWRSCHEYDN…NNPYSTGSRK (170 aa). The span at 171-182 shows a compositional bias: polar residues; sequence TLKTNNNPYSTG. Positions 171–214 are disordered; the sequence is TLKTNNNPYSTGSRKDRRRERQSPVYSEGTSSEKSISPPPAKKI.

Its subcellular location is the nucleus. The sequence is that of Putative T-box protein 11 (tbx-11) from Caenorhabditis elegans.